The primary structure comprises 606 residues: Ectonucleoside triphosphate diphosphohydrolase 7 (606 aa).

Over Met1–Arg28 the chain is Cytoplasmic. Residues Val29–Leu49 form a helical membrane-spanning segment. Residues Arg50 to Ser548 are Vesicular-facing. The active-site Proton acceptor is the Glu217. An N-linked (GlcNAc...) asparagine glycan is attached at Asn330. Cys448 and Cys477 are oxidised to a cystine. Residues Phe549–Leu569 form a helical membrane-spanning segment. At Tyr570–Pro606 the chain is on the cytoplasmic side.

This sequence belongs to the GDA1/CD39 NTPase family. Requires Ca(2+) as cofactor. It depends on Mg(2+) as a cofactor. As to expression, widely expressed. Expressed at high level in brain, kidney, liver, testis and small intestin. Weakly expressed in lung, thymus and heart.

The protein resides in the cytoplasmic vesicle membrane. The enzyme catalyses a ribonucleoside 5'-triphosphate + H2O = a ribonucleoside 5'-diphosphate + phosphate + H(+). It carries out the reaction UTP + H2O = UDP + phosphate + H(+). It catalyses the reaction GTP + H2O = GDP + phosphate + H(+). The catalysed reaction is CTP + H2O = CDP + phosphate + H(+). The enzyme catalyses ATP + H2O = ADP + phosphate + H(+). Its function is as follows. Catalyzes the hydrolysis of nucleoside triphosphates and diphosphates in a calcium- or magnesium-dependent manner. Preferentially hydrolyzes nucleoside 5'-triphosphates, with substrate preference for UTP &gt; GTP &gt; CTP. Hydrolyzes nucleoside diphosphates only to a minor extent. In contrast to its human ortholog is able to hydrolyze ATP. In the epithelial cells of small intestine controls luminal ATP levels, therefore regulating Th17-cell development. The sequence is that of Ectonucleoside triphosphate diphosphohydrolase 7 (Entpd7) from Mus musculus (Mouse).